We begin with the raw amino-acid sequence, 171 residues long: 3-hydroxydecanoyl-[acyl-carrier-protein] dehydratase (171 aa).

His70 is an active-site residue.

This sequence belongs to the thioester dehydratase family. FabA subfamily. Homodimer.

The protein resides in the cytoplasm. It catalyses the reaction a (3R)-hydroxyacyl-[ACP] = a (2E)-enoyl-[ACP] + H2O. The enzyme catalyses (3R)-hydroxydecanoyl-[ACP] = (2E)-decenoyl-[ACP] + H2O. The catalysed reaction is (2E)-decenoyl-[ACP] = (3Z)-decenoyl-[ACP]. Its pathway is lipid metabolism; fatty acid biosynthesis. Its function is as follows. Necessary for the introduction of cis unsaturation into fatty acids. Catalyzes the dehydration of (3R)-3-hydroxydecanoyl-ACP to E-(2)-decenoyl-ACP and then its isomerization to Z-(3)-decenoyl-ACP. Can catalyze the dehydratase reaction for beta-hydroxyacyl-ACPs with saturated chain lengths up to 16:0, being most active on intermediate chain length. This Shewanella frigidimarina (strain NCIMB 400) protein is 3-hydroxydecanoyl-[acyl-carrier-protein] dehydratase.